The primary structure comprises 141 residues: HTH-type transcriptional repressor NsrR (141 aa).

Residues 2–129 (QLTSFTDYGL…DNYTLADMVQ (128 aa)) enclose the HTH rrf2-type domain. The H-T-H motif DNA-binding region spans 28-51 (ISQVTEVYGVSRNHMVKIINQLSR). [2Fe-2S] cluster contacts are provided by cysteine 91, cysteine 96, and cysteine 102.

The cofactor is [2Fe-2S] cluster.

Nitric oxide-sensitive repressor of genes involved in protecting the cell against nitrosative stress. May require iron for activity. In Yersinia enterocolitica serotype O:8 / biotype 1B (strain NCTC 13174 / 8081), this protein is HTH-type transcriptional repressor NsrR.